A 378-amino-acid polypeptide reads, in one-letter code: mRNA cap guanine-N(7) methyltransferase (378 aa).

The region spanning 24–331 is the mRNA cap 0 methyltransferase domain; it reads SRIFFMRNMN…MYLVFGFRKK (308 aa). 33-34 provides a ligand contact to mRNA; it reads NN. S-adenosyl-L-methionine contacts are provided by K37, A62, D84, D116, Q138, and Y143. Composition is skewed to basic and acidic residues over residues 335-347 and 356-378; these read EKNLESEAPEIKK and DTDKTAEKNEERIEEKEENPSHC. Residues 335–378 are disordered; sequence EKNLESEAPEIKKVTPVPLNEDTDKTAEKNEERIEEKEENPSHC.

Belongs to the class I-like SAM-binding methyltransferase superfamily. mRNA cap 0 methyltransferase family.

It localises to the nucleus. It catalyses the reaction a 5'-end (5'-triphosphoguanosine)-ribonucleoside in mRNA + S-adenosyl-L-methionine = a 5'-end (N(7)-methyl 5'-triphosphoguanosine)-ribonucleoside in mRNA + S-adenosyl-L-homocysteine. MRNA-capping methyltransferase that methylates the N7 position of the added guanosine to the 5'-cap structure of mRNAs. Binds RNA containing 5'-terminal GpppC. This Caenorhabditis briggsae protein is mRNA cap guanine-N(7) methyltransferase.